The following is a 527-amino-acid chain: Peptide chain release factor 3 (527 aa).

Residues 9–277 form the tr-type G domain; sequence AKRRTFAIIS…AVVDWAPRPL (269 aa). GTP-binding positions include 18-25, 86-90, and 140-143; these read SHPDAGKT, DTPGH, and NKLD.

It belongs to the TRAFAC class translation factor GTPase superfamily. Classic translation factor GTPase family. PrfC subfamily.

It localises to the cytoplasm. In terms of biological role, increases the formation of ribosomal termination complexes and stimulates activities of RF-1 and RF-2. It binds guanine nucleotides and has strong preference for UGA stop codons. It may interact directly with the ribosome. The stimulation of RF-1 and RF-2 is significantly reduced by GTP and GDP, but not by GMP. The polypeptide is Peptide chain release factor 3 (Ectopseudomonas mendocina (strain ymp) (Pseudomonas mendocina)).